We begin with the raw amino-acid sequence, 243 residues long: Small ribosomal subunit protein uS2 (243 aa).

Belongs to the universal ribosomal protein uS2 family.

In Pseudoalteromonas atlantica (strain T6c / ATCC BAA-1087), this protein is Small ribosomal subunit protein uS2.